Reading from the N-terminus, the 314-residue chain is Ribosomal protein uL3 glutamine methyltransferase (314 aa).

It belongs to the protein N5-glutamine methyltransferase family. PrmB subfamily.

The enzyme catalyses L-glutaminyl-[ribosomal protein uL3] + S-adenosyl-L-methionine = N(5)-methyl-L-glutaminyl-[ribosomal protein uL3] + S-adenosyl-L-homocysteine + H(+). Methylates large ribosomal subunit protein uL3 on a specific glutamine residue. The sequence is that of Ribosomal protein uL3 glutamine methyltransferase from Francisella tularensis subsp. tularensis (strain SCHU S4 / Schu 4).